The sequence spans 619 residues: Zinc finger and BTB domain-containing protein 7C (619 aa).

A BTB domain is found at 34–101; that stretch reads CDVLLVVQEQ…AYTSTLTITA (68 aa). Residues 129-218 are disordered; sequence PGGDGGEEDD…DSFQAGSPGH (90 aa). A compositionally biased stretch (acidic residues) spans 133-173; that stretch reads GGEEDDKEDDDDDEDDDDEEDEEEEEEEEEDDDDDTEDFAD. The segment covering 191–208 has biased composition (basic and acidic residues); the sequence is KTDHLTEKAYSDTPRDFP. 3 C2H2-type zinc fingers span residues 364–386, 392–414, and 420–442; these read QQCPICHKVIMGAGKLPRHMRTH, YMCTICEVRFTRQDKLKIHMRKH, and YLCIHCNAKFVHNYDLKNHMRIH. A C2H2-type 4; degenerate zinc finger spans residues 448–478; it reads YQCEFCYKSFTRSDHLHRHIKRQSCRMARPR.

As to expression, detected in normal cervical keratinocytes, and in some cervical carcinoma cell lines.

In terms of biological role, may be a tumor suppressor gene. The polypeptide is Zinc finger and BTB domain-containing protein 7C (ZBTB7C) (Homo sapiens (Human)).